A 326-amino-acid chain; its full sequence is DNA-directed RNA polymerase subunit alpha (326 aa).

The alpha N-terminal domain (alpha-NTD) stretch occupies residues 1-231 (MQTALLKPKI…DQLSVFAALE (231 aa)). The tract at residues 247–326 (IDPILLRPVD…ENWPPAGLDK (80 aa)) is alpha C-terminal domain (alpha-CTD).

This sequence belongs to the RNA polymerase alpha chain family. In terms of assembly, homodimer. The RNAP catalytic core consists of 2 alpha, 1 beta, 1 beta' and 1 omega subunit. When a sigma factor is associated with the core the holoenzyme is formed, which can initiate transcription.

It carries out the reaction RNA(n) + a ribonucleoside 5'-triphosphate = RNA(n+1) + diphosphate. Functionally, DNA-dependent RNA polymerase catalyzes the transcription of DNA into RNA using the four ribonucleoside triphosphates as substrates. This chain is DNA-directed RNA polymerase subunit alpha, found in Cupriavidus pinatubonensis (strain JMP 134 / LMG 1197) (Cupriavidus necator (strain JMP 134)).